Consider the following 363-residue polypeptide: Dual-specificity RNA methyltransferase RlmN (363 aa).

Glu102 (proton acceptor) is an active-site residue. Positions 108–349 (EKKRATLCVS…KNRGQDIGAA (242 aa)) constitute a Radical SAM core domain. The cysteines at positions 115 and 350 are disulfide-linked. Positions 122, 126, and 129 each coordinate [4Fe-4S] cluster. Residues 174–175 (GE), Ser206, 228–230 (SLH), and Asn307 contribute to the S-adenosyl-L-methionine site. Cys350 serves as the catalytic S-methylcysteine intermediate.

The protein belongs to the radical SAM superfamily. RlmN family. The cofactor is [4Fe-4S] cluster.

It localises to the cytoplasm. It carries out the reaction adenosine(2503) in 23S rRNA + 2 reduced [2Fe-2S]-[ferredoxin] + 2 S-adenosyl-L-methionine = 2-methyladenosine(2503) in 23S rRNA + 5'-deoxyadenosine + L-methionine + 2 oxidized [2Fe-2S]-[ferredoxin] + S-adenosyl-L-homocysteine. It catalyses the reaction adenosine(37) in tRNA + 2 reduced [2Fe-2S]-[ferredoxin] + 2 S-adenosyl-L-methionine = 2-methyladenosine(37) in tRNA + 5'-deoxyadenosine + L-methionine + 2 oxidized [2Fe-2S]-[ferredoxin] + S-adenosyl-L-homocysteine. Functionally, specifically methylates position 2 of adenine 2503 in 23S rRNA and position 2 of adenine 37 in tRNAs. m2A2503 modification seems to play a crucial role in the proofreading step occurring at the peptidyl transferase center and thus would serve to optimize ribosomal fidelity. The chain is Dual-specificity RNA methyltransferase RlmN from Buchnera aphidicola subsp. Schizaphis graminum (strain Sg).